The primary structure comprises 284 residues: Aquaporin NIP1-1 (284 aa).

A compositionally biased stretch (polar residues) spans 1–12; the sequence is MAGGDNNSQTTN. The disordered stretch occupies residues 1–28; sequence MAGGDNNSQTTNGGSGHEQRAMEEGRKQ. Positions 17-28 are enriched in basic and acidic residues; that stretch reads HEQRAMEEGRKQ. A run of 2 helical transmembrane segments spans residues 50–70 and 78–98; these read IIAEIFGTYFLIFAGCGAVTI and ITFPGVAIVWGLAVMVMVYAV. The NPA 1 signature appears at 107 to 109; that stretch reads NPA. 3 consecutive transmembrane segments (helical) span residues 129 to 149, 166 to 186, and 194 to 214; these read AAAQMLGATLAAGTLRLMFGG, SLVLEFIITFYLMFVISGVAT, and LAGLAVGATILLNVLIAGPIS. Positions 219–221 match the NPA 2 motif; the sequence is NPA. The chain crosses the membrane as a helical span at residues 236–256; it reads IWVYIVGPVAGAVAGAWAYNI.

It belongs to the MIP/aquaporin (TC 1.A.8) family. NIP (TC 1.A.8.12) subfamily. As to expression, expressed in leaves and at lower levels in roots and anthers.

It is found in the membrane. In terms of biological role, aquaporins facilitate the transport of water and small neutral solutes across cell membranes. This Oryza sativa subsp. japonica (Rice) protein is Aquaporin NIP1-1 (NIP1-1).